Reading from the N-terminus, the 157-residue chain is Transcriptional repressor NrdR (157 aa).

A zinc finger spans residues 3–34; that stretch reads CPHCHQNSSRVIDSRPTDEGRVIRRRRECENC. The region spanning 49–139 is the ATP-cone domain; it reads LLVIKKNGTR…VYRQFKDMNV (91 aa).

It belongs to the NrdR family. Zn(2+) serves as cofactor.

In terms of biological role, negatively regulates transcription of bacterial ribonucleotide reductase nrd genes and operons by binding to NrdR-boxes. In Latilactobacillus sakei subsp. sakei (strain 23K) (Lactobacillus sakei subsp. sakei), this protein is Transcriptional repressor NrdR.